Here is a 162-residue protein sequence, read N- to C-terminus: Large ribosomal subunit protein uL10 (162 aa).

The protein belongs to the universal ribosomal protein uL10 family. In terms of assembly, part of the ribosomal stalk of the 50S ribosomal subunit. The N-terminus interacts with L11 and the large rRNA to form the base of the stalk. The C-terminus forms an elongated spine to which L12 dimers bind in a sequential fashion forming a multimeric L10(L12)X complex.

Forms part of the ribosomal stalk, playing a central role in the interaction of the ribosome with GTP-bound translation factors. This is Large ribosomal subunit protein uL10 from Acholeplasma laidlawii (strain PG-8A).